The following is a 432-amino-acid chain: Probable imidazolonepropionase (432 aa).

Positions 159 and 192 each coordinate 4-imidazolone-5-propanoate. Tyr-159 is a binding site for N-formimidoyl-L-glutamate. His-260 is a Fe(3+) binding site. Residue His-260 coordinates Zn(2+). 4-imidazolone-5-propanoate is bound at residue Glu-263. Position 334 (Asp-334) interacts with Fe(3+). Position 334 (Asp-334) interacts with Zn(2+). Asn-336 is a binding site for N-formimidoyl-L-glutamate.

It belongs to the metallo-dependent hydrolases superfamily. HutI family. Zn(2+) is required as a cofactor. Requires Fe(3+) as cofactor.

It catalyses the reaction 4-imidazolone-5-propanoate + H2O = N-formimidoyl-L-glutamate. It functions in the pathway amino-acid degradation; L-histidine degradation into L-glutamate; N-formimidoyl-L-glutamate from L-histidine: step 3/3. This chain is Probable imidazolonepropionase (amdhd1), found in Xenopus tropicalis (Western clawed frog).